The sequence spans 159 residues: Large ribosomal subunit protein uL15 (159 aa).

Positions Met-1–Asn-39 are disordered. A compositionally biased stretch (gly residues) spans Arg-21–Val-35.

This sequence belongs to the universal ribosomal protein uL15 family. As to quaternary structure, part of the 50S ribosomal subunit.

In terms of biological role, binds to the 23S rRNA. This is Large ribosomal subunit protein uL15 from Hyphomonas neptunium (strain ATCC 15444).